Here is a 311-residue protein sequence, read N- to C-terminus: MADVLSVGVNLEAFAQAISAIQALRSSVSRVFDCLKDGMRNKETLEGREKAFIAHFQDNLHSVNRDLNELERLSNLVGKPSENHPLHNSGLLSLDPVQDKTPLYSQLLQAYKWSNKLQYHAGLASGLLNQQSLKRSANQMGVSAKRRPKAQPTTLVLPPQYVDDVISRIDRMFPEMTIHLSRPNGTSAMLLVTLGKVLKVIVVMRSLFIDRTIVKGYNENVYTEDGKLDIWSKSNYQVFQKVTDHATTALLHYQLPQMPDVVVRSFMTWLRSYIKLFQAPCQRCGKFLQDGLPPTWRDFRTLEAFHDTCRQ.

A Phosphoserine modification is found at serine 132. N6-methyllysine is present on lysine 134.

It belongs to the Mediator complex subunit 27 family. As to quaternary structure, component of the Mediator complex, which is composed of MED1, MED4, MED6, MED7, MED8, MED9, MED10, MED11, MED12, MED13, MED13L, MED14, MED15, MED16, MED17, MED18, MED19, MED20, MED21, MED22, MED23, MED24, MED25, MED26, MED27, MED29, MED30, MED31, CCNC, CDK8 and CDC2L6/CDK11. The MED12, MED13, CCNC and CDK8 subunits form a distinct module termed the CDK8 module. Mediator containing the CDK8 module is less active than Mediator lacking this module in supporting transcriptional activation. Individual preparations of the Mediator complex lacking one or more distinct subunits have been variously termed ARC, CRSP, DRIP, PC2, SMCC and TRAP.

Its subcellular location is the nucleus. Its function is as follows. Component of the Mediator complex, a coactivator involved in the regulated transcription of nearly all RNA polymerase II-dependent genes. Mediator functions as a bridge to convey information from gene-specific regulatory proteins to the basal RNA polymerase II transcription machinery. Mediator is recruited to promoters by direct interactions with regulatory proteins and serves as a scaffold for the assembly of a functional preinitiation complex with RNA polymerase II and the general transcription factors. In Bos taurus (Bovine), this protein is Mediator of RNA polymerase II transcription subunit 27 (MED27).